Reading from the N-terminus, the 376-residue chain is Putative glutamate--cysteine ligase 2 (376 aa).

This sequence belongs to the glutamate--cysteine ligase type 2 family. YbdK subfamily.

It catalyses the reaction L-cysteine + L-glutamate + ATP = gamma-L-glutamyl-L-cysteine + ADP + phosphate + H(+). Functionally, ATP-dependent carboxylate-amine ligase which exhibits weak glutamate--cysteine ligase activity. This chain is Putative glutamate--cysteine ligase 2, found in Mycolicibacterium paratuberculosis (strain ATCC BAA-968 / K-10) (Mycobacterium paratuberculosis).